We begin with the raw amino-acid sequence, 67 residues long: ATP synthase F(0) complex subunit 8 (67 aa).

A helical transmembrane segment spans residues Thr-8–Phe-24. Position 54 is an N6-acetyllysine; alternate (Lys-54). Lys-54 bears the N6-succinyllysine; alternate mark. Lys-57 is subject to N6-acetyllysine.

It belongs to the ATPase protein 8 family. Component of the ATP synthase complex composed at least of ATP5F1A/subunit alpha, ATP5F1B/subunit beta, ATP5MC1/subunit c (homooctomer), MT-ATP6/subunit a, MT-ATP8/subunit 8, ATP5ME/subunit e, ATP5MF/subunit f, ATP5MG/subunit g, ATP5MK/subunit k, ATP5MJ/subunit j, ATP5F1C/subunit gamma, ATP5F1D/subunit delta, ATP5F1E/subunit epsilon, ATP5PF/subunit F6, ATP5PB/subunit b, ATP5PD/subunit d, ATP5PO/subunit OSCP. ATP synthase complex consists of a soluble F(1) head domain (subunits alpha(3) and beta(3)) - the catalytic core - and a membrane F(0) domain - the membrane proton channel (subunits c, a, 8, e, f, g, k and j). These two domains are linked by a central stalk (subunits gamma, delta, and epsilon) rotating inside the F1 region and a stationary peripheral stalk (subunits F6, b, d, and OSCP). Interacts with PRICKLE3.

Its subcellular location is the mitochondrion membrane. Its function is as follows. Subunit 8, of the mitochondrial membrane ATP synthase complex (F(1)F(0) ATP synthase or Complex V) that produces ATP from ADP in the presence of a proton gradient across the membrane which is generated by electron transport complexes of the respiratory chain. ATP synthase complex consist of a soluble F(1) head domain - the catalytic core - and a membrane F(1) domain - the membrane proton channel. These two domains are linked by a central stalk rotating inside the F(1) region and a stationary peripheral stalk. During catalysis, ATP synthesis in the catalytic domain of F(1) is coupled via a rotary mechanism of the central stalk subunits to proton translocation. In vivo, can only synthesize ATP although its ATP hydrolase activity can be activated artificially in vitro. Part of the complex F(0) domain. This Halichoerus grypus (Gray seal) protein is ATP synthase F(0) complex subunit 8.